Here is a 622-residue protein sequence, read N- to C-terminus: Threonine--tRNA ligase (622 aa).

Residues 1–141 (MKTLLIHSDY…SRKITTERKE (141 aa)) form an editing domain region. Residues 199 to 498 (PHVKYIKEKE…TLENRPPALP (300 aa)) are catalytic. Positions 291, 343, and 467 each coordinate Zn(2+).

Belongs to the class-II aminoacyl-tRNA synthetase family. In terms of assembly, homodimer. It depends on Zn(2+) as a cofactor.

The protein localises to the cytoplasm. It carries out the reaction tRNA(Thr) + L-threonine + ATP = L-threonyl-tRNA(Thr) + AMP + diphosphate + H(+). In terms of biological role, catalyzes the attachment of threonine to tRNA(Thr) in a two-step reaction: L-threonine is first activated by ATP to form Thr-AMP and then transferred to the acceptor end of tRNA(Thr). Also edits incorrectly charged L-seryl-tRNA(Thr). This is Threonine--tRNA ligase from Methanococcus maripaludis (strain C6 / ATCC BAA-1332).